Reading from the N-terminus, the 487-residue chain is Transcriptional adapter ADA2b (487 aa).

The segment covering 1 to 13 has biased composition (polar residues); the sequence is MGRSRGNFQNFED. A disordered region spans residues 1–25; sequence MGRSRGNFQNFEDPTQRTRKKKNAA. The ZZ-type zinc finger occupies 42–98; sequence GGKYNCDYCQKDITGKIRIKCAVCPDFDLCIECMSVGAEITPHKCDHPYRVMGNLTF. Zn(2+)-binding residues include Cys47, Cys50, Cys62, Cys65, Cys71, Cys74, His84, and His88. The SANT domain maps to 100–152; it reads LICPDWSADDEMLLLEGLEIYGLGNWAEVAEHVGTKSKEQCLEHYRNIYLNSP. The residue at position 216 (Lys216) is an N6-acetyllysine; by GCN5. Residues 368–383 show a composition bias toward basic and acidic residues; the sequence is RKRKRENEEGMNRGKE. The tract at residues 368–388 is disordered; it reads RKRKRENEEGMNRGKESGQFG. The SWIRM domain occupies 401–487; it reads QASSSYVNDL…MLVKKGIAQL (87 aa).

In terms of assembly, interacts in vitro with the HAT domain of GCN5 and with the DNA-binding domain of the transcriptional activator DREB1B/CBF1. Interacts with BZIP11. In terms of processing, acetylated in vitro by GCN5, but acetylation is not essential for biological activity. Expressed in roots, leaves, stems, flowers and siliques, with the strongest activity in the meristematic zones.

It is found in the nucleus. Required for the function of some acidic activation domains, which activate transcription from a distant site. The exact mechanism of action is not yet known. ADA2 stimulates the acetyltransferase activity of GCN5 on free histones or nucleosomes, probably by opening up the promoter region. Mediates auxin and cytokinin signals in the control of cell proliferation and might be involved in repression of a freezing tolerance pathway at warm temperature. Involved in the positive regulation of salt-induced gene expression by maintaining locus-specific acetylation of histones H4 and H3. This Arabidopsis thaliana (Mouse-ear cress) protein is Transcriptional adapter ADA2b (ADA2B).